A 396-amino-acid polypeptide reads, in one-letter code: Bone morphogenetic protein 2 (396 aa).

Residues 1-23 (MVAGTRCLLALLLPQVLLGGAAG) form the signal peptide. The propeptide at 24-282 (LVPELGRRKF…GHPLHKREKR (259 aa)) is cleaved by PCSK5. Residues 84–121 (RRHSGQPGSPAPDHRLERAASRANTVRSFHHEESLEEL) are disordered. S87 is modified (phosphoserine). N-linked (GlcNAc...) asparagine glycosylation is found at N135, N163, N164, and N200. Positions 271–293 (GKGHPLHKREKRQAKHKQRKRLK) are disordered. The segment covering 274 to 293 (HPLHKREKRQAKHKQRKRLK) has biased composition (basic residues). 3 disulfide bridges follow: C296-C361, C325-C393, and C329-C395. N-linked (GlcNAc...) (high mannose) asparagine glycosylation occurs at N338.

The protein belongs to the TGF-beta family. As to quaternary structure, homodimer; disulfide-linked. Interacts with SOSTDC1. Interacts with GREM2, RGMA, RGMB and RGMC. Interacts with ASPN. Interacts with MAFP5. Interacts with FBN1 (via N-terminal domain) and FBN2. Interacts with type I receptor BMPR1A. Interacts with type II receptor BMPR2. Interacts with SCUBE3. Interacts with TNFAIP6 (primarily via Link domain); this interaction is inhibited by hyaluronan. Interacts with ERFE. Interacts with BMPR1A/ALK3; the interaction may induce HAMP expression. Forms heterodimers with BMP6 in vitro; the heterodimer then binds to its receptor BMPR1A /ALK3 and may induce HAMP expression. Interacts with TGFBR3. As to expression, particularly abundant in lung, spleen and colon and in low but significant levels in heart, brain, placenta, liver, skeletal muscle, kidney, pancreas, prostate, ovary and small intestine.

It is found in the secreted. Functionally, growth factor of the TGF-beta superfamily that plays essential roles in many developmental processes, including cardiogenesis, neurogenesis, and osteogenesis. Induces cartilage and bone formation. Initiates the canonical BMP signaling cascade by associating with type I receptor BMPR1A and type II receptor BMPR2. Once all three components are bound together in a complex at the cell surface, BMPR2 phosphorylates and activates BMPR1A. In turn, BMPR1A propagates signal by phosphorylating SMAD1/5/8 that travel to the nucleus and act as activators and repressors of transcription of target genes. Also acts to promote expression of HAMP, via the interaction with its receptor BMPR1A/ALK3. Can also signal through non-canonical pathways such as ERK/MAP kinase signaling cascade that regulates osteoblast differentiation. Also stimulates the differentiation of myoblasts into osteoblasts via the EIF2AK3-EIF2A-ATF4 pathway by stimulating EIF2A phosphorylation which leads to increased expression of ATF4 which plays a central role in osteoblast differentiation. Acts as a positive regulator of odontoblast differentiation during mesenchymal tooth germ formation, expression is repressed during the bell stage by MSX1-mediated inhibition of CTNNB1 signaling. The polypeptide is Bone morphogenetic protein 2 (BMP2) (Homo sapiens (Human)).